The chain runs to 259 residues: 2,3-dihydroxy-2,3-dihydro-p-cumate dehydrogenase (259 aa).

18 to 42 (VTGGAHGIGLGIVERLLGLGARVTA) lines the NAD(+) pocket. The active-site Proton acceptor is the Tyr163.

Belongs to the short-chain dehydrogenases/reductases (SDR) family.

The enzyme catalyses (2R,3S)-2,3-dihydroxy-2,3-dihydro-p-cumate + NAD(+) = 2,3-dihydroxy-p-cumate + NADH + H(+). Its pathway is aromatic compound metabolism; p-cumate degradation; acetaldehyde and pyruvate from p-cumate: step 2/7. This chain is 2,3-dihydroxy-2,3-dihydro-p-cumate dehydrogenase (cmtB), found in Pseudomonas putida (strain ATCC 700007 / DSM 6899 / JCM 31910 / BCRC 17059 / LMG 24140 / F1).